Here is a 290-residue protein sequence, read N- to C-terminus: GTPase Era (290 aa).

The Era-type G domain maps to Lys2–Glu167. The tract at residues Gly10–Ser17 is G1. Residue Gly10–Ser17 participates in GTP binding. The interval Asn36–Arg40 is G2. The tract at residues Asp57–Gly60 is G3. Residues Asp57–Leu61 and Asn116–Asp119 each bind GTP. The segment at Asn116 to Asp119 is G4. Residues Tyr146–Ile148 form a G5 region. Residues Ile194–Lys274 enclose the KH type-2 domain.

The protein belongs to the TRAFAC class TrmE-Era-EngA-EngB-Septin-like GTPase superfamily. Era GTPase family. Monomer.

It is found in the cytoplasm. It localises to the cell inner membrane. Functionally, an essential GTPase that binds both GDP and GTP, with rapid nucleotide exchange. Plays a role in 16S rRNA processing and 30S ribosomal subunit biogenesis and possibly also in cell cycle regulation and energy metabolism. The polypeptide is GTPase Era (Campylobacter lari (strain RM2100 / D67 / ATCC BAA-1060)).